The following is a 535-amino-acid chain: Peptide chain release factor 3 (535 aa).

In terms of domain architecture, tr-type G spans 8 to 276; the sequence is ARRRTFAIIS…ALVDLAPQPG (269 aa). Residues 17-24, 85-89, and 139-142 contribute to the GTP site; these read SHPDAGKT, DTPGH, and NKMD.

This sequence belongs to the TRAFAC class translation factor GTPase superfamily. Classic translation factor GTPase family. PrfC subfamily.

It is found in the cytoplasm. Functionally, increases the formation of ribosomal termination complexes and stimulates activities of RF-1 and RF-2. It binds guanine nucleotides and has strong preference for UGA stop codons. It may interact directly with the ribosome. The stimulation of RF-1 and RF-2 is significantly reduced by GTP and GDP, but not by GMP. The protein is Peptide chain release factor 3 of Bordetella avium (strain 197N).